A 2637-amino-acid polypeptide reads, in one-letter code: Nonribisomal peptide synthetase valB (2637 aa).

Residues 1 to 376 (MADGADYTQR…KALIRSPPST (376 aa)) form a condensation 1 region. Residues 413 to 803 (SQASRRPDAA…VGRRDNQIKL (391 aa)) form an adenylation 1 region. The region spanning 946 to 1022 (PPANPPERAL…EAASEIKEPT (77 aa)) is the Carrier 1 domain. An O-(pantetheine 4'-phosphoryl)serine modification is found at S983. The disordered stretch occupies residues 1016-1045 (SEIKEPTDASAPSPSPISRDLPLQKSNHDR). The interval 1063–1506 (VEAIYPCTAL…LSRADMSLLQ (444 aa)) is condensation 2. Residues 1524-1933 (AREVAHQRPL…EGRKDTRVKL (410 aa)) form an adenylation 2 region. Positions 2078-2154 (KEVTDDQAFM…YMVSKTSVSN (77 aa)) constitute a Carrier 2 domain. S2115 carries the O-(pantetheine 4'-phosphoryl)serine modification. Residues 2193–2582 (ESVAPATDAQ…LWMGAYLDAA (390 aa)) form a condensation 3 region.

Belongs to the NRP synthetase family.

The protein operates within secondary metabolite biosynthesis. In terms of biological role, nonribisomal peptide synthetase; part of the gene cluster that mediates the biosynthesis of valactamides. The first step of the pathway is performed by the highly reducing polyketide synthase valA that produces the polyketide part of the final products. An acetyl starter unit is incorporated by the ketosynthase domain of valA, and subsequently 6 malonyl-CoA-derived ketide units are incorporated and fully reduced to their respective alkane forms by the action of the ketoreductase, dehydratase, and enoylreductase domains (except for the penultimate unit, which is reduced only to the alkene). The final five ketide units are each proposed to be alpha-methylated by the methyltransferase domain before ketone reduction by the ketoreductase domain. The C1 domain of the nonribisomal peptide synthetase valB then catalyzes amide bond formation between the heptaketide chain and L-valine (L-Val) attached to the T1 domain. The C2 domain incorporating L-isoleucine (L-Ile) then carries out chain elongation, which is followed by macrolactonization by the Ct domain to release the final product. The polypeptide is Nonribisomal peptide synthetase valB (Aspergillus terreus).